Consider the following 463-residue polypeptide: A-type ATP synthase subunit B (463 aa).

It belongs to the ATPase alpha/beta chains family. In terms of assembly, has multiple subunits with at least A(3), B(3), C, D, E, F, H, I and proteolipid K(x).

The protein resides in the cell membrane. In terms of biological role, component of the A-type ATP synthase that produces ATP from ADP in the presence of a proton gradient across the membrane. The B chain is a regulatory subunit. The polypeptide is A-type ATP synthase subunit B (Thermococcus gammatolerans (strain DSM 15229 / JCM 11827 / EJ3)).